The following is a 387-amino-acid chain: S-adenosylmethionine synthase (387 aa).

His15 is a binding site for ATP. Asp17 is a binding site for Mg(2+). A K(+)-binding site is contributed by Glu43. L-methionine-binding residues include Glu56 and Gln99. The segment at 99 to 109 (QSPDIAQGVNN) is flexible loop. Residues 166-168 (DAK), 232-233 (RF), Asp241, 247-248 (RK), Ala264, and Lys268 contribute to the ATP site. Residue Asp241 participates in L-methionine binding. An L-methionine-binding site is contributed by Lys272.

Belongs to the AdoMet synthase family. As to quaternary structure, homotetramer; dimer of dimers. Mg(2+) is required as a cofactor. It depends on K(+) as a cofactor.

It is found in the cytoplasm. It carries out the reaction L-methionine + ATP + H2O = S-adenosyl-L-methionine + phosphate + diphosphate. It functions in the pathway amino-acid biosynthesis; S-adenosyl-L-methionine biosynthesis; S-adenosyl-L-methionine from L-methionine: step 1/1. In terms of biological role, catalyzes the formation of S-adenosylmethionine (AdoMet) from methionine and ATP. The overall synthetic reaction is composed of two sequential steps, AdoMet formation and the subsequent tripolyphosphate hydrolysis which occurs prior to release of AdoMet from the enzyme. This is S-adenosylmethionine synthase from Methylobacillus flagellatus (strain ATCC 51484 / DSM 6875 / VKM B-1610 / KT).